The following is a 138-amino-acid chain: MPNFSGNWKIIRSENFEDLLKVLGVNVMLRKIAVAAASKPAVEIKQEGDTFYIKTSTTVRTTEINFKIGEEFEEQTVDGRPCKSLVKWESENKMVCEQRLLKGEGPKTSWTRELTNDGELILTMTADDIVCTRVYVRE.

A Nuclear localization signal motif is present at residues 21-31 (KVLGVNVMLRK). Lys-102 is covalently cross-linked (Glycyl lysine isopeptide (Lys-Gly) (interchain with G-Cter in SUMO)). 133–135 (RVY) is an all-trans-retinoate binding site.

It belongs to the calycin superfamily. Fatty-acid binding protein (FABP) family. As to quaternary structure, interacts with importin alpha, RXR and RARA. Sumoylated in response to retinoic acid binding, sumoylation is critical for dissociation from ER and subsequent nuclear translocation.

The protein resides in the cytoplasm. The protein localises to the endoplasmic reticulum. It is found in the nucleus. In terms of biological role, transports retinoic acid to the nucleus. Regulates the access of retinoic acid to the nuclear retinoic acid receptors. In Bos taurus (Bovine), this protein is Cellular retinoic acid-binding protein 2 (CRABP2).